A 218-amino-acid polypeptide reads, in one-letter code: Large ribosomal subunit protein bL25 (218 aa).

Disordered regions lie at residues 1–20 and 185–218; these read MKTH…GPAR and PTAA…ASEE. Positions 192-218 are enriched in acidic residues; that stretch reads EEGEEGEEGEEGGEGGEAEGAEAASEE.

Belongs to the bacterial ribosomal protein bL25 family. CTC subfamily. In terms of assembly, part of the 50S ribosomal subunit; part of the 5S rRNA/L5/L18/L25 subcomplex. Contacts the 5S rRNA. Binds to the 5S rRNA independently of L5 and L18.

Functionally, this is one of the proteins that binds to the 5S RNA in the ribosome where it forms part of the central protuberance. The sequence is that of Large ribosomal subunit protein bL25 from Desulfatibacillum aliphaticivorans.